A 318-amino-acid chain; its full sequence is NADH-ubiquinone oxidoreductase chain 1 (318 aa).

The next 8 membrane-spanning stretches (helical) occupy residues 3-23 (LINL…LTLL), 69-89 (MLFI…WTPL), 102-122 (MLFI…SGWA), 144-164 (VTLA…TLLS), 171-191 (YIWL…STLA), 222-242 (LFFL…IILF), 253-273 (ELYT…FLWI), and 294-314 (LPLT…LAGI).

This sequence belongs to the complex I subunit 1 family. Core subunit of respiratory chain NADH dehydrogenase (Complex I) which is composed of 45 different subunits.

The protein resides in the mitochondrion inner membrane. The catalysed reaction is a ubiquinone + NADH + 5 H(+)(in) = a ubiquinol + NAD(+) + 4 H(+)(out). In terms of biological role, core subunit of the mitochondrial membrane respiratory chain NADH dehydrogenase (Complex I) which catalyzes electron transfer from NADH through the respiratory chain, using ubiquinone as an electron acceptor. Essential for the catalytic activity and assembly of complex I. This chain is NADH-ubiquinone oxidoreductase chain 1 (MT-ND1), found in Murina suilla (Brown tube-nosed bat).